The following is a 318-amino-acid chain: Myoblast determination protein 1 (318 aa).

Met-1 is covalently cross-linked (Peptide (Met-Gly) (interchain with G-Cter in ubiquitin)). Lys-104 is subject to N6-methyllysine; by EHMT2. The 52-residue stretch at 109 to 160 (DRRKAATMRERRRLSKVNEAFETLKRCTSSNPNQRLPKVEILRNAIRYIEGL) folds into the bHLH domain. Disordered stretches follow at residues 175–224 (AAFY…RQNG) and 262–318 (SPAA…YQVL). The span at 196-206 (SDASSPRSNCS) shows a compositional bias: polar residues. The span at 262 to 271 (SPAAPSLLLP) shows a compositional bias: low complexity. Over residues 272 to 282 (DAPPESPPGPP) the composition is skewed to pro residues. The span at 290 to 304 (AEQGTQTPSPDSTPQ) shows a compositional bias: polar residues.

Efficient DNA binding requires dimerization with another bHLH protein. Seems to form active heterodimers with ITF-2. Interacts with SUV39H1. Interacts with DDX5. Interacts with CHD2. Interacts with TSC22D3. Interacts with SETD3. Interacts with P-TEFB complex; promotes the transcriptional activity of MYOD1 through its CDK9-mediated phosphorylation. Interacts with CSRP3. Interacts with NUPR1. Post-translationally, phosphorylated by CDK9. This phosphorylation promotes its function in muscle differentiation. In terms of processing, acetylated by a complex containing EP300 and PCAF. The acetylation is essential to activate target genes. Conversely, its deacetylation by SIRT1 inhibits its function. Ubiquitinated on the N-terminus; which is required for proteasomal degradation. Post-translationally, methylation at Lys-104 by EHMT2/G9a inhibits myogenic activity.

It localises to the nucleus. Acts as a transcriptional activator that promotes transcription of muscle-specific target genes and plays a role in muscle differentiation. Together with MYF5 and MYOG, co-occupies muscle-specific gene promoter core region during myogenesis. Induces fibroblasts to differentiate into myoblasts. Interacts with and is inhibited by the twist protein. This interaction probably involves the basic domains of both proteins. The polypeptide is Myoblast determination protein 1 (Myod1) (Rattus norvegicus (Rat)).